A 276-amino-acid polypeptide reads, in one-letter code: Protein SCO1 homolog 2, mitochondrial (276 aa).

Residues 1–14 (MLPCRRLVLSCKNQ) constitute a mitochondrion transit peptide. The chain crosses the membrane as a helical span at residues 66 to 82 (YAVPAILLGFAGFVGFL). Residues 110-273 (VKGPIIGGPF…SQELLKEVAS (164 aa)) enclose the Thioredoxin domain.

It belongs to the SCO1/2 family. Expressed in the whole plant with highest expression in imbibed seeds and embryos, and the root hair zone.

It localises to the mitochondrion inner membrane. Functionally, thought to play a role in cellular copper homeostasis, mitochondrial redox signaling or insertion of copper into the active site of COX. Participates in copper and redox homeostasis. This is Protein SCO1 homolog 2, mitochondrial (HCC2) from Arabidopsis thaliana (Mouse-ear cress).